The following is a 225-amino-acid chain: Transcriptional regulatory protein CssR (225 aa).

Positions Thr4 to Leu117 constitute a Response regulatory domain. Asp52 carries the 4-aspartylphosphate modification. Residues Lys129–Ser224 constitute a DNA-binding region (ompR/PhoB-type).

Phosphorylated by CssS.

It is found in the cytoplasm. Its function is as follows. Member of the two-component regulatory system CssS/CssR required to control the cellular response to secretion stress. This chain is Transcriptional regulatory protein CssR (cssR), found in Bacillus subtilis (strain 168).